A 493-amino-acid polypeptide reads, in one-letter code: Alpha-amylase-related protein (493 aa).

Positions 1–19 (MFKLALTLTLCLAGSLSLA) are cleaved as a signal peptide. At glutamine 20 the chain carries Pyrrolidone carboxylic acid. Residues cysteine 47 and cysteine 103 are joined by a disulfide bond. Residues asparagine 117, glutamine 168, and aspartate 177 each coordinate Ca(2+). Cysteine 156 and cysteine 170 are oxidised to a cystine. Arginine 205 provides a ligand contact to chloride. Aspartate 207 (nucleophile) is an active-site residue. Histidine 211 contributes to the Ca(2+) binding site. Catalysis depends on glutamate 244, which acts as the Proton donor. Asparagine 307 and arginine 342 together coordinate chloride. 3 disulfide bridges follow: cysteine 375/cysteine 381, cysteine 417/cysteine 440, and cysteine 447/cysteine 459.

The protein belongs to the glycosyl hydrolase 13 family. Monomer. The cofactor is Ca(2+). It depends on chloride as a cofactor.

The protein resides in the secreted. It carries out the reaction Endohydrolysis of (1-&gt;4)-alpha-D-glucosidic linkages in polysaccharides containing three or more (1-&gt;4)-alpha-linked D-glucose units.. The sequence is that of Alpha-amylase-related protein (Amyrel) from Drosophila yakuba (Fruit fly).